Reading from the N-terminus, the 147-residue chain is Gastrula-specific protein 17 (147 aa).

Residues 1-119 (MSQNLDFLAL…TQVYGNHQPG (119 aa)) form a disordered region. Composition is skewed to polar residues over residues 20 to 36 (SPTS…STPP), 45 to 57 (RQIS…YTNP), and 74 to 88 (LLQN…SPTA).

The sequence is that of Gastrula-specific protein 17 (gs17) from Xenopus laevis (African clawed frog).